Here is a 192-residue protein sequence, read N- to C-terminus: Elongation factor P (192 aa).

Belongs to the elongation factor P family.

The protein resides in the cytoplasm. It functions in the pathway protein biosynthesis; polypeptide chain elongation. Functionally, involved in peptide bond synthesis. Stimulates efficient translation and peptide-bond synthesis on native or reconstituted 70S ribosomes in vitro. Probably functions indirectly by altering the affinity of the ribosome for aminoacyl-tRNA, thus increasing their reactivity as acceptors for peptidyl transferase. The sequence is that of Elongation factor P from Borrelia turicatae (strain 91E135).